Consider the following 1070-residue polypeptide: Carbamoyl phosphate synthase large chain (1070 aa).

Residues 1 to 401 (MPKRDDIKTI…ALLKAVRSLE (401 aa)) form a carboxyphosphate synthetic domain region. ATP-binding residues include Arg-129, Arg-169, Gly-175, Gly-176, Lys-208, Ile-210, Glu-215, Gly-241, Ile-242, His-243, Gln-284, and Glu-298. The region spanning 133–327 (RDLMNELGEP…IAKLAAKIAV (195 aa)) is the ATP-grasp 1 domain. Mg(2+) contacts are provided by Gln-284, Glu-298, and Asn-300. Mn(2+)-binding residues include Gln-284, Glu-298, and Asn-300. An oligomerization domain region spans residues 402–546 (IGADHLLLEE…YSTYEEENES (145 aa)). The tract at residues 547 to 929 (TRSAKESVIV…ALYKGFVASG (383 aa)) is carbamoyl phosphate synthetic domain. One can recognise an ATP-grasp 2 domain in the interval 671 to 861 (EKALEILQIP…MANVATRVIL (191 aa)). The ATP site is built by Arg-707, Arg-746, Val-748, Glu-752, Gly-777, Val-778, His-779, Ser-780, Gln-820, and Glu-832. Mg(2+)-binding residues include Gln-820, Glu-832, and Asn-834. Residues Gln-820, Glu-832, and Asn-834 each coordinate Mn(2+). The region spanning 930 to 1070 (TTMHDYGTVL…SEVKQPKARV (141 aa)) is the MGS-like domain. The allosteric domain stretch occupies residues 930–1070 (TTMHDYGTVL…SEVKQPKARV (141 aa)).

This sequence belongs to the CarB family. Composed of two chains; the small (or glutamine) chain promotes the hydrolysis of glutamine to ammonia, which is used by the large (or ammonia) chain to synthesize carbamoyl phosphate. Tetramer of heterodimers (alpha,beta)4. Requires Mg(2+) as cofactor. It depends on Mn(2+) as a cofactor.

The catalysed reaction is hydrogencarbonate + L-glutamine + 2 ATP + H2O = carbamoyl phosphate + L-glutamate + 2 ADP + phosphate + 2 H(+). The enzyme catalyses hydrogencarbonate + NH4(+) + 2 ATP = carbamoyl phosphate + 2 ADP + phosphate + 2 H(+). The protein operates within amino-acid biosynthesis; L-arginine biosynthesis; carbamoyl phosphate from bicarbonate: step 1/1. It functions in the pathway pyrimidine metabolism; UMP biosynthesis via de novo pathway; (S)-dihydroorotate from bicarbonate: step 1/3. Its function is as follows. Large subunit of the glutamine-dependent carbamoyl phosphate synthetase (CPSase). CPSase catalyzes the formation of carbamoyl phosphate from the ammonia moiety of glutamine, carbonate, and phosphate donated by ATP, constituting the first step of 2 biosynthetic pathways, one leading to arginine and/or urea and the other to pyrimidine nucleotides. The large subunit (synthetase) binds the substrates ammonia (free or transferred from glutamine from the small subunit), hydrogencarbonate and ATP and carries out an ATP-coupled ligase reaction, activating hydrogencarbonate by forming carboxy phosphate which reacts with ammonia to form carbamoyl phosphate. The protein is Carbamoyl phosphate synthase large chain of Listeria monocytogenes serotype 4a (strain HCC23).